Reading from the N-terminus, the 546-residue chain is (+)-epi-alpha-bisabolol synthase (546 aa).

The Mg(2+) site is built by Asp-297, Asp-301, Asp-441, Thr-445, and Glu-449. A DDXXD motif motif is present at residues 297–301 (DDIYD).

Belongs to the terpene synthase family. It depends on Mg(2+) as a cofactor.

It catalyses the reaction (2E,6E)-farnesyl diphosphate + H2O = (+)-epi-alpha-bisabolol + diphosphate. The protein operates within secondary metabolite biosynthesis; terpenoid biosynthesis. Sesquiterpene synthase involved in the biosynthesis of (+)-epi-alpha-bisabolol, a precursor of the natural sweetner hernandulcin. The chain is (+)-epi-alpha-bisabolol synthase from Phyla dulcis (Aztec sweet herb).